The sequence spans 339 residues: MPSYIVVGGQWGDEGKGSIIAYLAIHDKPEVIARGGVGTNAGHSVFINGKKYAVRQLPTGFMNENARLLVGAGVLVDPEVFFHELEHLKDFNVRGRIGLDYRCTVIEPGHKELDRSNGYLHGKIGTTGSGCGPANADRALRKAKQVKDLKELEPYLTDVAQEVNEALDEGKLVLVEGTQGFGLSLYYGSYPYVTSKDTSASAIASDVGIGPTRVDDVIVVFKSFPTRVGAGPFPTEMSEEEAERMGLVEYGTVTGRRRRVGWFDFEFARYSARINGATMLAVTMLDKYDKEAFGVTDFNKLPQKAKDFIAEIEEKVGVPVALIKTGPELEHIIDLRENI.

Residues 12 to 18 (GDEGKGS) and 42 to 44 (GHS) contribute to the GTP site. Residue D13 is the Proton acceptor of the active site. Mg(2+) is bound by residues D13 and G42. Residues 13–16 (DEGK), 40–43 (NAGH), T127, R141, Q179, T194, and R256 each bind IMP. H43 functions as the Proton donor in the catalytic mechanism. 252-258 (TVTGRRR) serves as a coordination point for substrate. GTP is bound by residues R258, 284–286 (MLD), and 324–326 (KTG).

The protein belongs to the adenylosuccinate synthetase family. As to quaternary structure, homodimer. Mg(2+) is required as a cofactor.

The protein localises to the cytoplasm. It catalyses the reaction IMP + L-aspartate + GTP = N(6)-(1,2-dicarboxyethyl)-AMP + GDP + phosphate + 2 H(+). The protein operates within purine metabolism; AMP biosynthesis via de novo pathway; AMP from IMP: step 1/2. In terms of biological role, plays an important role in the de novo pathway of purine nucleotide biosynthesis. Catalyzes the first committed step in the biosynthesis of AMP from IMP. In Thermococcus sibiricus (strain DSM 12597 / MM 739), this protein is Adenylosuccinate synthetase.